A 320-amino-acid polypeptide reads, in one-letter code: Aspartate carbamoyltransferase catalytic subunit (320 aa).

Carbamoyl phosphate contacts are provided by Arg68 and Thr69. Lys96 is an L-aspartate binding site. Positions 118, 148, and 151 each coordinate carbamoyl phosphate. The L-aspartate site is built by Arg181 and Arg236. Residues Gly277 and Pro278 each coordinate carbamoyl phosphate.

This sequence belongs to the aspartate/ornithine carbamoyltransferase superfamily. ATCase family. Heterododecamer (2C3:3R2) of six catalytic PyrB chains organized as two trimers (C3), and six regulatory PyrI chains organized as three dimers (R2).

It catalyses the reaction carbamoyl phosphate + L-aspartate = N-carbamoyl-L-aspartate + phosphate + H(+). It participates in pyrimidine metabolism; UMP biosynthesis via de novo pathway; (S)-dihydroorotate from bicarbonate: step 2/3. In terms of biological role, catalyzes the condensation of carbamoyl phosphate and aspartate to form carbamoyl aspartate and inorganic phosphate, the committed step in the de novo pyrimidine nucleotide biosynthesis pathway. This Polaromonas sp. (strain JS666 / ATCC BAA-500) protein is Aspartate carbamoyltransferase catalytic subunit.